The primary structure comprises 168 residues: Photosystem I assembly protein Ycf3 (168 aa).

3 TPR repeats span residues 35–68, 72–105, and 120–153; these read AFTY…EIDP, SYIL…NPFL, and GEQA…TPGN.

Belongs to the Ycf3 family.

Its subcellular location is the plastid. The protein localises to the chloroplast thylakoid membrane. Functionally, essential for the assembly of the photosystem I (PSI) complex. May act as a chaperone-like factor to guide the assembly of the PSI subunits. The chain is Photosystem I assembly protein Ycf3 from Gossypium barbadense (Sea Island cotton).